We begin with the raw amino-acid sequence, 338 residues long: 5-dehydro-2-deoxygluconokinase (338 aa).

It belongs to the carbohydrate kinase PfkB family.

It catalyses the reaction 5-dehydro-2-deoxy-D-gluconate + ATP = 6-phospho-5-dehydro-2-deoxy-D-gluconate + ADP + H(+). The protein operates within polyol metabolism; myo-inositol degradation into acetyl-CoA; acetyl-CoA from myo-inositol: step 5/7. Catalyzes the phosphorylation of 5-dehydro-2-deoxy-D-gluconate (2-deoxy-5-keto-D-gluconate or DKG) to 6-phospho-5-dehydro-2-deoxy-D-gluconate (DKGP). This is 5-dehydro-2-deoxygluconokinase from Mesomycoplasma hyopneumoniae (strain J / ATCC 25934 / NCTC 10110) (Mycoplasma hyopneumoniae).